Here is a 282-residue protein sequence, read N- to C-terminus: NADPH-dependent 7-cyano-7-deazaguanine reductase (282 aa).

88-90 (IES) serves as a coordination point for substrate. Residue 90-91 (SK) coordinates NADPH. Cys190 serves as the catalytic Thioimide intermediate. Residue Asp197 is the Proton donor of the active site. 229 to 230 (HE) is a substrate binding site. 258 to 259 (RG) is an NADPH binding site.

Belongs to the GTP cyclohydrolase I family. QueF type 2 subfamily. Homodimer.

The protein resides in the cytoplasm. The enzyme catalyses 7-aminomethyl-7-carbaguanine + 2 NADP(+) = 7-cyano-7-deazaguanine + 2 NADPH + 3 H(+). It participates in tRNA modification; tRNA-queuosine biosynthesis. Functionally, catalyzes the NADPH-dependent reduction of 7-cyano-7-deazaguanine (preQ0) to 7-aminomethyl-7-deazaguanine (preQ1). This chain is NADPH-dependent 7-cyano-7-deazaguanine reductase, found in Escherichia coli O157:H7.